The primary structure comprises 159 residues: Large ribosomal subunit protein uL11 (159 aa).

Belongs to the universal ribosomal protein uL11 family. As to quaternary structure, part of the ribosomal stalk of the 50S ribosomal subunit. Interacts with L10 and the large rRNA to form the base of the stalk. L10 forms an elongated spine to which L12 dimers bind in a sequential fashion forming a multimeric L10(L12)X complex.

Functionally, forms part of the ribosomal stalk which helps the ribosome interact with GTP-bound translation factors. This chain is Large ribosomal subunit protein uL11, found in Methanococcus maripaludis (strain DSM 14266 / JCM 13030 / NBRC 101832 / S2 / LL).